Reading from the N-terminus, the 423-residue chain is Dihydrolipoyllysine-residue succinyltransferase component of 2-oxoglutarate dehydrogenase complex (423 aa).

Positions 1–76 constitute a Lipoyl-binding domain; the sequence is MPEVKVPELA…EVGQAIAVIG (76 aa). Lys42 is modified (N6-lipoyllysine). The disordered stretch occupies residues 76 to 185; the sequence is GEGSGNASKE…APAKEEKKYN (110 aa). Residues 80-96 are compositionally biased toward polar residues; that stretch reads GNASKENSNDNTPQQND. Over residues 99–115 the composition is skewed to basic and acidic residues; the sequence is TNNKKEETTNKSADKAE. The segment covering 116-131 has biased composition (polar residues); sequence VNQTNDDNQQRVNATP. Residues 128-164 enclose the Peripheral subunit-binding (PSBD) domain; that stretch reads NATPSARRYARENGVNLAEVSPKTNDVVRKEDIDKKQ. Residues 153–164 are compositionally biased toward basic and acidic residues; the sequence is DVVRKEDIDKKQ. Over residues 165-177 the composition is skewed to low complexity; it reads QAPASTQTTQQAP. Active-site residues include His394 and Asp398.

This sequence belongs to the 2-oxoacid dehydrogenase family. As to quaternary structure, forms a 24-polypeptide structural core with octahedral symmetry. Part of the 2-oxoglutarate dehydrogenase (OGDH) complex composed of E1 (2-oxoglutarate dehydrogenase), E2 (dihydrolipoamide succinyltransferase) and E3 (dihydrolipoamide dehydrogenase); the complex contains multiple copies of the three enzymatic components (E1, E2 and E3). (R)-lipoate is required as a cofactor.

The enzyme catalyses N(6)-[(R)-dihydrolipoyl]-L-lysyl-[protein] + succinyl-CoA = N(6)-[(R)-S(8)-succinyldihydrolipoyl]-L-lysyl-[protein] + CoA. Its pathway is amino-acid degradation; L-lysine degradation via saccharopine pathway; glutaryl-CoA from L-lysine: step 6/6. Its function is as follows. E2 component of the 2-oxoglutarate dehydrogenase (OGDH) complex which catalyzes the second step in the conversion of 2-oxoglutarate to succinyl-CoA and CO(2). This chain is Dihydrolipoyllysine-residue succinyltransferase component of 2-oxoglutarate dehydrogenase complex (odhB), found in Staphylococcus aureus (strain MRSA252).